The chain runs to 183 residues: Adenylate kinase (183 aa).

ATP is bound at residue 12–17 (GAGKGT). An NMP region spans residues 32–61 (STGDLLRAEVSAGSALGQEAESVMNRGELV). AMP-binding positions include T33, R38, 59–61 (ELV), 86–89 (GFPR), and Q93. The segment at 127–133 (SRGRDDD) is LID. Position 128 (R128) interacts with ATP. Residues R130 and R141 each contribute to the AMP site. Residue G169 coordinates ATP.

This sequence belongs to the adenylate kinase family. As to quaternary structure, monomer.

The protein localises to the cytoplasm. The enzyme catalyses AMP + ATP = 2 ADP. Its pathway is purine metabolism; AMP biosynthesis via salvage pathway; AMP from ADP: step 1/1. Catalyzes the reversible transfer of the terminal phosphate group between ATP and AMP. Plays an important role in cellular energy homeostasis and in adenine nucleotide metabolism. In Synechococcus sp. (strain CC9311), this protein is Adenylate kinase.